Here is a 290-residue protein sequence, read N- to C-terminus: MSNIIARFHKIQVQDGVKVWYREAGAAGNPTILLLHGFPTSSNMFRNLIPLLAGQFHIIAPDLPGFGFTETPENYKFSFDSLCESIGYLLDTLSIEKFAMYIFDYGSPVGFRLALKFPSRITGIVTQNGNAYEEGLDDRFWGPLKEYWKSYQSDPVFVKSLIPYLEDPANVICQYHDGVPAIESVDPAAYTLDIALIQRTGQTDIQLRLFFDYQNNIKLYPAFQKFLRDSKIPVLVAWGANDTIFSVAGAEAYRKDVDNLKVVYYDTGHFALETHVVAIAEEIISMFAEN.

An AB hydrolase-1 domain is found at 30-274 (PTILLLHGFP…YDTGHFALET (245 aa)). The active site involves H269.

This sequence belongs to the DmpD/TodF/XylF esterase family.

This is an uncharacterized protein from Saccharomyces cerevisiae (strain ATCC 204508 / S288c) (Baker's yeast).